Reading from the N-terminus, the 176-residue chain is Parathyroid hormone-related protein (176 aa).

An N-terminal signal peptide occupies residues 1–25; that stretch reads MMFTKLFQQWSFAVFLLSYSVPSYG. Residues 26 to 37 constitute a propeptide that is removed on maturation; sequence RSVEGISRRLKR. The important for receptor binding stretch occupies residues 58–69; sequence RIFLQNLIEGVN. A disordered region spans residues 76–157; it reads TSEVSPNPKP…WLNSGMYGSN (82 aa). 2 stretches are compositionally biased toward polar residues: residues 77 to 91 and 106 to 116; these read SEVS…NTKN and TQETNKSQTYK. The short motif at 109-130 is the Nuclear localization signal element; the sequence is TNKSQTYKEQPLKVSGKKKKAK. Basic residues predominate over residues 123-133; sequence SGKKKKAKPGK.

Belongs to the parathyroid hormone family.

The protein resides in the secreted. It localises to the cytoplasm. It is found in the nucleus. In terms of biological role, neuroendocrine peptide which is a critical regulator of cellular and organ growth, development, migration, differentiation and survival and of epithelial calcium ion transport. Acts by binding to its receptor, PTH1R, activating G protein-coupled receptor signaling. Regulates endochondral bone development and epithelial-mesenchymal interactions during the formation of the mammary glands and teeth. Required for skeletal homeostasis. Functionally, potent inhibitor of osteoclastic bone resorption. In Gallus gallus (Chicken), this protein is Parathyroid hormone-related protein (PTHLH).